A 256-amino-acid chain; its full sequence is Ribonuclease HII (256 aa).

Residues 67-255 (QLVGGVDEVG…VSEMVGLKKA (189 aa)) enclose the RNase H type-2 domain. Positions 73, 74, and 165 each coordinate a divalent metal cation.

Belongs to the RNase HII family. Requires Mn(2+) as cofactor. It depends on Mg(2+) as a cofactor.

The protein resides in the cytoplasm. The enzyme catalyses Endonucleolytic cleavage to 5'-phosphomonoester.. In terms of biological role, endonuclease that specifically degrades the RNA of RNA-DNA hybrids. The sequence is that of Ribonuclease HII from Lactobacillus delbrueckii subsp. bulgaricus (strain ATCC 11842 / DSM 20081 / BCRC 10696 / JCM 1002 / NBRC 13953 / NCIMB 11778 / NCTC 12712 / WDCM 00102 / Lb 14).